The primary structure comprises 116 residues: MLQYIPLSNLPYSHIPLHHPSLTISTKCTRIIMHGTCLSGLYPVPFTHKVHHYPHFNIYISFGDPKYCITALNTYVIPLLHHILTTQFIHTYFNIPTKSPPKSPKHKNYLSFNFTK.

This sequence belongs to the UPF0320 family.

The protein is Putative UPF0320 protein YLL065W of Saccharomyces cerevisiae (strain ATCC 204508 / S288c) (Baker's yeast).